Here is a 256-residue protein sequence, read N- to C-terminus: Nuclear shuttle protein (256 aa).

The interval methionine 1–alanine 53 is disordered. The segment covering glutamine 17–proline 39 has biased composition (basic residues). The Bipartite nuclear localization signal motif lies at asparagine 21–threonine 42. The Nuclear localization signal motif lies at aspartate 81 to leucine 96. The segment at glutamate 150–aspartate 187 is interaction with Arabidopsis thaliana NSI protein.

This sequence belongs to the begomovirus nuclear shuttle protein family. As to quaternary structure, binds to single-stranded and double-stranded viral DNA. Interacts with the host nuclear shuttle interacting (NSI) protein. This interaction may allow NSP to recruit NSI monomers to the viral genome and thus regulate nuclear export of viral genome by NSP.

The protein localises to the host nucleus. It is found in the host cytoplasm. Its subcellular location is the host cell membrane. In terms of biological role, binds to the genomic viral ssDNA, shuttles it into and out of the cell nucleus. Begomoviruses use 2 proteins to transport their DNA from cell to cell. The nuclear shuttle protein (NSP) shuttles it between nucleus and cytoplasm and the movement protein (MP) probably transports the DNA-NSP complex to the cell periphery and facilitates movement across the cell wall. The protein is Nuclear shuttle protein of Abutilon mosaic virus (isolate West India) (AbMV).